We begin with the raw amino-acid sequence, 118 residues long: V-type proton ATPase subunit F (118 aa).

This sequence belongs to the V-ATPase F subunit family. V-ATPase is a heteromultimeric enzyme composed of a peripheral catalytic V1 complex (components A to H) attached to an integral membrane V0 proton pore complex (components: a, c, c', c'', d, e, f and VOA1).

Its subcellular location is the vacuole membrane. Its function is as follows. Subunit of the V1 complex of vacuolar(H+)-ATPase (V-ATPase), a multisubunit enzyme composed of a peripheral complex (V1) that hydrolyzes ATP and a membrane integral complex (V0) that translocates protons. V-ATPase is responsible for acidifying and maintaining the pH of intracellular compartments. The chain is V-type proton ATPase subunit F from Saccharomyces cerevisiae (strain ATCC 204508 / S288c) (Baker's yeast).